The chain runs to 130 residues: Phosphoribosyl-AMP cyclohydrolase (130 aa).

A Mg(2+)-binding site is contributed by D77. C78 contributes to the Zn(2+) binding site. Mg(2+)-binding residues include D79 and D81. 2 residues coordinate Zn(2+): C95 and C102.

This sequence belongs to the PRA-CH family. In terms of assembly, homodimer. Mg(2+) serves as cofactor. It depends on Zn(2+) as a cofactor.

The protein resides in the cytoplasm. The catalysed reaction is 1-(5-phospho-beta-D-ribosyl)-5'-AMP + H2O = 1-(5-phospho-beta-D-ribosyl)-5-[(5-phospho-beta-D-ribosylamino)methylideneamino]imidazole-4-carboxamide. The protein operates within amino-acid biosynthesis; L-histidine biosynthesis; L-histidine from 5-phospho-alpha-D-ribose 1-diphosphate: step 3/9. Catalyzes the hydrolysis of the adenine ring of phosphoribosyl-AMP. The protein is Phosphoribosyl-AMP cyclohydrolase of Pseudomonas putida (strain W619).